The chain runs to 262 residues: MGNIKTLLENRFKKPTSDKMESLAKKRLEGELSPFLNGFTNPKLSSQEEAKFRQLLEEYSFSNEISKHDLQQLCHLSAQVKQIHHQAVLLHGERIKKVRELLTSYREGAFSAWLLLTYGNRQTPYNFLVYYELFSTLPDSLKLELEKLPRQAVYTLAAREGTQEKKEAIIRNYQGETKGELLEIIRKEFPLLPTDRRHTPLSQKAFTLLAKGTKLLRQCTDVSHEELIALEKLIKKLQKVTTNLLSNTKVSRNDNEIQNSRN.

This sequence belongs to the UPF0137 (pGP6-D) family.

The sequence is that of Virulence plasmid protein pGP6-D-related protein from Chlamydia muridarum (strain MoPn / Nigg).